The chain runs to 172 residues: Ribosome maturation factor RimM (172 aa).

Residues 98–171 (PGEYYYHQIV…KVIVELMEGL (74 aa)) form the PRC barrel domain.

It belongs to the RimM family. In terms of assembly, binds ribosomal protein uS19.

Its subcellular location is the cytoplasm. An accessory protein needed during the final step in the assembly of 30S ribosomal subunit, possibly for assembly of the head region. Essential for efficient processing of 16S rRNA. May be needed both before and after RbfA during the maturation of 16S rRNA. It has affinity for free ribosomal 30S subunits but not for 70S ribosomes. This is Ribosome maturation factor RimM from Levilactobacillus brevis (strain ATCC 367 / BCRC 12310 / CIP 105137 / JCM 1170 / LMG 11437 / NCIMB 947 / NCTC 947) (Lactobacillus brevis).